Here is a 221-residue protein sequence, read N- to C-terminus: Glutathione S-transferase alpha-5 (221 aa).

The GST N-terminal domain occupies 3–83 (GKPVLHYFDG…YIATKYNLYG (81 aa)). Lys4 carries the post-translational modification N6-succinyllysine. Residues Tyr9, Arg45, 54 to 55 (QV), and 67 to 68 (QT) contribute to the glutathione site. A GST C-terminal domain is found at 85 to 207 (DMKERALIDM…LQPGSQRKPF (123 aa)).

The protein belongs to the GST superfamily. Alpha family. As to quaternary structure, heterodimer of YC1 and YC2. In terms of tissue distribution, liver, nasal mucosa and epididymis.

It is found in the cytoplasm. The catalysed reaction is RX + glutathione = an S-substituted glutathione + a halide anion + H(+). Functionally, conjugation of reduced glutathione to a wide number of exogenous and endogenous hydrophobic electrophiles. Has substantial activity toward aflatoxin B1-8,9-epoxide. In Rattus norvegicus (Rat), this protein is Glutathione S-transferase alpha-5 (Gsta5).